Reading from the N-terminus, the 452-residue chain is Type II methyltransferase M.EcaI (452 aa).

The protein belongs to the N(4)/N(6)-methyltransferase family.

The catalysed reaction is a 2'-deoxyadenosine in DNA + S-adenosyl-L-methionine = an N(6)-methyl-2'-deoxyadenosine in DNA + S-adenosyl-L-homocysteine + H(+). A beta subtype methylase, recognizes the double-stranded sequence 5'-GGTNACC-3', methylates A-5 on both strands and protects the DNA from cleavage by the EcaI endonuclease. The protein is Type II methyltransferase M.EcaI (ecaIM) of Enterobacter cloacae.